The primary structure comprises 179 residues: MVKEVVDSTTMKRVFTRITYEIIEQNKGISDLVFVGIKTRGVFIAERIAKRLEQLEGVTVPVGTLDITLYRDDQHDLNSHNEPQLNGNDIPVDITDKHVILIDDVLYTGRTIRAALDALMDLGRPKKISLAVLVDRGHRELPIRPDFVGKNIPTALNEQIKVAMQEIDEHDGITIEKLN.

The PRPP-binding motif lies at 99–111 (VILIDDVLYTGRT).

It belongs to the purine/pyrimidine phosphoribosyltransferase family. PyrR subfamily. As to quaternary structure, homodimer and homohexamer; in equilibrium.

The enzyme catalyses UMP + diphosphate = 5-phospho-alpha-D-ribose 1-diphosphate + uracil. In terms of biological role, regulates transcriptional attenuation of the pyrimidine nucleotide (pyr) operon by binding in a uridine-dependent manner to specific sites on pyr mRNA. This disrupts an antiterminator hairpin in the RNA and favors formation of a downstream transcription terminator, leading to a reduced expression of downstream genes. Its function is as follows. Also displays a weak uracil phosphoribosyltransferase activity which is not physiologically significant. In Latilactobacillus sakei subsp. sakei (strain 23K) (Lactobacillus sakei subsp. sakei), this protein is Bifunctional protein PyrR.